Reading from the N-terminus, the 520-residue chain is DNA mismatch repair protein MutL (520 aa).

This sequence belongs to the DNA mismatch repair MutL/HexB family.

Its function is as follows. This protein is involved in the repair of mismatches in DNA. It is required for dam-dependent methyl-directed DNA mismatch repair. May act as a 'molecular matchmaker', a protein that promotes the formation of a stable complex between two or more DNA-binding proteins in an ATP-dependent manner without itself being part of a final effector complex. This is DNA mismatch repair protein MutL from Persephonella marina (strain DSM 14350 / EX-H1).